An 82-amino-acid polypeptide reads, in one-letter code: Cytochrome b559 subunit alpha (82 aa).

Residues Val-21–Trp-35 traverse the membrane as a helical segment. His-23 provides a ligand contact to heme.

The protein belongs to the PsbE/PsbF family. Heterodimer of an alpha subunit and a beta subunit. PSII is composed of 1 copy each of membrane proteins PsbA, PsbB, PsbC, PsbD, PsbE, PsbF, PsbH, PsbI, PsbJ, PsbK, PsbL, PsbM, PsbT, PsbX, PsbY, PsbZ, Psb30/Ycf12, at least 3 peripheral proteins of the oxygen-evolving complex and a large number of cofactors. It forms dimeric complexes. Requires heme b as cofactor.

It localises to the plastid. The protein resides in the chloroplast thylakoid membrane. Its function is as follows. This b-type cytochrome is tightly associated with the reaction center of photosystem II (PSII). PSII is a light-driven water:plastoquinone oxidoreductase that uses light energy to abstract electrons from H(2)O, generating O(2) and a proton gradient subsequently used for ATP formation. It consists of a core antenna complex that captures photons, and an electron transfer chain that converts photonic excitation into a charge separation. The sequence is that of Cytochrome b559 subunit alpha from Ostreococcus tauri.